The chain runs to 406 residues: Succinylornithine transaminase (406 aa).

Lysine 252 carries the post-translational modification N6-(pyridoxal phosphate)lysine.

Belongs to the class-III pyridoxal-phosphate-dependent aminotransferase family. AstC subfamily. Pyridoxal 5'-phosphate serves as cofactor.

The enzyme catalyses N(2)-succinyl-L-ornithine + 2-oxoglutarate = N-succinyl-L-glutamate 5-semialdehyde + L-glutamate. The protein operates within amino-acid degradation; L-arginine degradation via AST pathway; L-glutamate and succinate from L-arginine: step 3/5. Its function is as follows. Catalyzes the transamination of N(2)-succinylornithine and alpha-ketoglutarate into N(2)-succinylglutamate semialdehyde and glutamate. Can also act as an acetylornithine aminotransferase. This is Succinylornithine transaminase from Escherichia coli O17:K52:H18 (strain UMN026 / ExPEC).